Here is a 107-residue protein sequence, read N- to C-terminus: Phosphoribosyl-ATP pyrophosphatase (107 aa).

The protein belongs to the PRA-PH family.

The protein resides in the cytoplasm. It catalyses the reaction 1-(5-phospho-beta-D-ribosyl)-ATP + H2O = 1-(5-phospho-beta-D-ribosyl)-5'-AMP + diphosphate + H(+). The protein operates within amino-acid biosynthesis; L-histidine biosynthesis; L-histidine from 5-phospho-alpha-D-ribose 1-diphosphate: step 2/9. The protein is Phosphoribosyl-ATP pyrophosphatase of Bacillus cereus (strain AH187).